The primary structure comprises 590 residues: Transcription factor bHLH13 (590 aa).

Disordered stretches follow at residues 274–296 (LQHH…HRQF) and 385–439 (AASS…EAER). Over residues 281-293 (QQQQQQPPQQQQH) the composition is skewed to low complexity. The segment covering 416–425 (RPRKRGRRPA) has biased composition (basic residues). Residues 429-478 (AEALNHVEAERQRREKLNQRFYALRSVVPNISKMDKASLLGDAVSYINEL) form the bHLH domain.

In terms of assembly, homodimer.

The protein resides in the nucleus. The chain is Transcription factor bHLH13 (BHLH13) from Arabidopsis thaliana (Mouse-ear cress).